The primary structure comprises 329 residues: Signal recognition particle receptor FtsY (329 aa).

Residues 127 to 134 (GVNGVGKT), 209 to 213 (DTAGR), and 273 to 276 (TKLD) each bind GTP.

Belongs to the GTP-binding SRP family. FtsY subfamily. As to quaternary structure, part of the signal recognition particle protein translocation system, which is composed of SRP and FtsY.

It is found in the cell membrane. It localises to the cytoplasm. The enzyme catalyses GTP + H2O = GDP + phosphate + H(+). Functionally, involved in targeting and insertion of nascent membrane proteins into the cytoplasmic membrane. Acts as a receptor for the complex formed by the signal recognition particle (SRP) and the ribosome-nascent chain (RNC). The chain is Signal recognition particle receptor FtsY from Bacillus subtilis (strain 168).